We begin with the raw amino-acid sequence, 122 residues long: Acidic phospholipase A2 5 (122 aa).

Disulfide bonds link Cys-26–Cys-115, Cys-28–Cys-44, Cys-43–Cys-95, Cys-49–Cys-122, Cys-50–Cys-88, Cys-57–Cys-81, and Cys-75–Cys-86. Ca(2+) is bound by residues Phe-27, Gly-29, and Gly-31. The active site involves His-47. Asp-48 serves as a coordination point for Ca(2+). Asp-89 is an active-site residue.

This sequence belongs to the phospholipase A2 family. Group II subfamily. D49 sub-subfamily. As to quaternary structure, monomer (predominant). Non-covalently linked homodimers are also observed. The cofactor is Ca(2+). As to expression, expressed by the venom gland.

It localises to the secreted. The enzyme catalyses a 1,2-diacyl-sn-glycero-3-phosphocholine + H2O = a 1-acyl-sn-glycero-3-phosphocholine + a fatty acid + H(+). With respect to regulation, preincubation with heparin slightly increase the enzymatic activity. Its function is as follows. Snake venom phospholipase A2 (PLA2) that inhibits platelet aggregation induced by ADP, arachidonic acid and PAF. Acts in a enzymatic independent manner on a proteinase-activated receptor (PAR1, F2R) to evoke calcium release through the inositol 1,4,5-trisphosphate receptor (ITPR1, IP3R) and induces mouse aorta contraction. PAR1, phospholipase C and IP3R inhibitors suppress PA2-induced aorta contraction. PLA2 catalyzes the calcium-dependent hydrolysis of the 2-acyl groups in 3-sn-phosphoglycerides. The protein is Acidic phospholipase A2 5 of Trimeresurus stejnegeri (Chinese green tree viper).